The chain runs to 451 residues: Protein SAR DEFICIENT 1 (451 aa).

The tract at residues 149 to 270 is DNA-binding; that stretch reads DKWTSDEFES…AFHKKLSSRH (122 aa).

This sequence belongs to the plant ACBP60 protein family. As to quaternary structure, (Microbial infection) Interacts with V.dahliae SCP41.

The protein resides in the nucleus. Its function is as follows. Transcription activator that binds DNA in a sequence-specific manner, 5'-GAAATTTTGG-3', to promote the expression of target genes. Recruited to the promoter of ICS1 and other defense-related genes (e.g. PR1 and SID2) in response to both biotic (e.g. Pseudomonas syringae pv. maculicola ES4326) and abiotic stresses (e.g. UV-B), thus triggering slow defense responses by stimulating salicylic acid (SA) biosynthesis. Required for basal and systemic acquired resistance to P.syringae pv. maculicola and Hyaloperonospora arabidopsidis. This Arabidopsis thaliana (Mouse-ear cress) protein is Protein SAR DEFICIENT 1.